A 331-amino-acid chain; its full sequence is Ketol-acid reductoisomerase (NADP(+)) (331 aa).

The KARI N-terminal Rossmann domain occupies 2 to 182; that stretch reads ARLYYDADAN…GGTRAGILET (181 aa). NADP(+) is bound by residues 25 to 28, Ser-51, Ser-53, and 83 to 86; these read YGSQ and DEVQ. His-108 is an active-site residue. Gly-134 serves as a coordination point for NADP(+). The KARI C-terminal knotted domain occupies 183–328; it reads TFREETETDL…KDLRAMFSWL (146 aa). Residues Asp-191, Glu-195, Glu-227, and Glu-231 each coordinate Mg(2+). Ser-252 contacts substrate.

The protein belongs to the ketol-acid reductoisomerase family. Mg(2+) serves as cofactor.

It carries out the reaction (2R)-2,3-dihydroxy-3-methylbutanoate + NADP(+) = (2S)-2-acetolactate + NADPH + H(+). The enzyme catalyses (2R,3R)-2,3-dihydroxy-3-methylpentanoate + NADP(+) = (S)-2-ethyl-2-hydroxy-3-oxobutanoate + NADPH + H(+). Its pathway is amino-acid biosynthesis; L-isoleucine biosynthesis; L-isoleucine from 2-oxobutanoate: step 2/4. It participates in amino-acid biosynthesis; L-valine biosynthesis; L-valine from pyruvate: step 2/4. Functionally, involved in the biosynthesis of branched-chain amino acids (BCAA). Catalyzes an alkyl-migration followed by a ketol-acid reduction of (S)-2-acetolactate (S2AL) to yield (R)-2,3-dihydroxy-isovalerate. In the isomerase reaction, S2AL is rearranged via a Mg-dependent methyl migration to produce 3-hydroxy-3-methyl-2-ketobutyrate (HMKB). In the reductase reaction, this 2-ketoacid undergoes a metal-dependent reduction by NADPH to yield (R)-2,3-dihydroxy-isovalerate. In Cyanothece sp. (strain PCC 7425 / ATCC 29141), this protein is Ketol-acid reductoisomerase (NADP(+)).